The following is a 98-amino-acid chain: Nuclear protein 2 (98 aa).

Residues 1-11 (MEPAAPTVQPR) are compositionally biased toward low complexity. Disordered stretches follow at residues 1 to 24 (MEPA…PPVG) and 78 to 98 (LNSQ…TRLT). Positions 81–98 (QRKRRQRQLQPRPRTRLT) are enriched in basic residues.

This sequence belongs to the NUPR family.

It is found in the nucleus. Functionally, acts as a transcriptional repressor by inhibiting gene expression at the NUPR1 promoter in a p53/TP53-dependent manner in cancer cells. Involved in the G1 cell cycle arrest, and in a decrease in cell viability and cell proliferation. Plays a role as a negative regulator of the protumoral factor NUPR1. The polypeptide is Nuclear protein 2 (Bos taurus (Bovine)).